Here is a 910-residue protein sequence, read N- to C-terminus: Schlafen family member 8 (910 aa).

The interval 1-354 (METHPSLAVK…WVRMMVDFGP (354 aa)) is n'-domain region. Residues Glu-205 and Glu-210 contribute to the active site. Residues His-280, Cys-282, and Cys-319 each coordinate Zn(2+). 599 to 606 (GLPGSGKT) is an ATP binding site.

Belongs to the Schlafen family. Subgroup III subfamily. Mg(2+) is required as a cofactor. As to expression, in T-cells, expressed at relatively constant levels during development: expressed in immature CD3(-)CD4(-)CD8(-) T-cells (DN stage), in CD4(+)CD8(+) double-positive stage (DP) and mature CD4(+) or CD8(+) thymocytes. Expression is slightly reduced at the DP stage.

It is found in the cytoplasm. Functionally, endoribonuclease that cleaves tRNAs and rRNAs. Cleaves tRNAs 11 nucleotides from the 3'-terminus at the acceptor stem. May be involved in immune system via regulation of inflammation. The polypeptide is Schlafen family member 8 (Mus musculus (Mouse)).